Reading from the N-terminus, the 291-residue chain is Formamidopyrimidine-DNA glycosylase (291 aa).

P2 functions as the Schiff-base intermediate with DNA in the catalytic mechanism. Residue E3 is the Proton donor of the active site. Residue K58 is the Proton donor; for beta-elimination activity of the active site. Residues H100, R123, and K166 each coordinate DNA. The segment at 257 to 291 adopts an FPG-type zinc-finger fold; that stretch reads SVYGREGKECLHCGIPIVRILQSGRSSFYCSQCQK. The active-site Proton donor; for delta-elimination activity is the R281.

The protein belongs to the FPG family. Monomer. The cofactor is Zn(2+).

It carries out the reaction Hydrolysis of DNA containing ring-opened 7-methylguanine residues, releasing 2,6-diamino-4-hydroxy-5-(N-methyl)formamidopyrimidine.. It catalyses the reaction 2'-deoxyribonucleotide-(2'-deoxyribose 5'-phosphate)-2'-deoxyribonucleotide-DNA = a 3'-end 2'-deoxyribonucleotide-(2,3-dehydro-2,3-deoxyribose 5'-phosphate)-DNA + a 5'-end 5'-phospho-2'-deoxyribonucleoside-DNA + H(+). In terms of biological role, involved in base excision repair of DNA damaged by oxidation or by mutagenic agents. Acts as a DNA glycosylase that recognizes and removes damaged bases. Has a preference for oxidized purines, such as 7,8-dihydro-8-oxoguanine (8-oxoG). Has AP (apurinic/apyrimidinic) lyase activity and introduces nicks in the DNA strand. Cleaves the DNA backbone by beta-delta elimination to generate a single-strand break at the site of the removed base with both 3'- and 5'-phosphates. In Bartonella henselae (strain ATCC 49882 / DSM 28221 / CCUG 30454 / Houston 1) (Rochalimaea henselae), this protein is Formamidopyrimidine-DNA glycosylase.